A 485-amino-acid polypeptide reads, in one-letter code: Noelin (485 aa).

The signal sequence occupies residues Met1–Ala16. N-linked (GlcNAc...) asparagine glycans are attached at residues Asn33, Asn103, Asn187, Asn288, Asn307, Asn394, Asn431, and Asn473. The stretch at Arg87 to Cys227 forms a coiled coil. An Olfactomedin-like domain is found at Ala226–His478. A disulfide bridge connects residues Cys227 and Cys409. Residues Ser482–Leu485 carry the Endoplasmic reticulum retention signal motif.

As to quaternary structure, homotetramer; disulfide-linked. Dimer of dimers, giving rise to a V-shaped homotretramer. Isoform 1 and isoform 3 interact with RTN4R. Identified in a complex with RTN4R and LINGO1. Peripherally associated with AMPAR complex. AMPAR complex consists of an inner core made of 4 pore-forming GluA/GRIA proteins (GRIA1, GRIA2, GRIA3 and GRIA4) and 4 major auxiliary subunits arranged in a twofold symmetry. One of the two pairs of distinct binding sites is occupied either by CNIH2, CNIH3 or CACNG2, CACNG3. The other harbors CACNG2, CACNG3, CACNG4, CACNG8 or GSG1L. This inner core of AMPAR complex is complemented by outer core constituents binding directly to the GluA/GRIA proteins at sites distinct from the interaction sites of the inner core constituents. Outer core constituents include at least PRRT1, PRRT2, CKAMP44/SHISA9, FRRS1L and NRN1. The proteins of the inner and outer core serve as a platform for other, more peripherally associated AMPAR constituents, including OLFM1. Alone or in combination, these auxiliary subunits control the gating and pharmacology of the AMPAR complex and profoundly impact their biogenesis and protein processing. Interacts with OLFM2. Interacts with DTNB. As to expression, expressed in the brain cortex, olfactory bulb and vomeronasal neuroepithelium (at protein level). Detected in brain cortex, hippocampus, dorsal root ganglion and olfactory bulb.

The protein resides in the secreted. The protein localises to the synapse. It is found in the endoplasmic reticulum. Its subcellular location is the cell projection. It localises to the axon. The protein resides in the perikaryon. Its function is as follows. Contributes to the regulation of axonal growth in the embryonic and adult central nervous system by inhibiting interactions between RTN4R and LINGO1. Inhibits RTN4R-mediated axon growth cone collapse. May play an important role in regulating the production of neural crest cells by the neural tube. May be required for normal responses to olfactory stimuli. This Mus musculus (Mouse) protein is Noelin (Olfm1).